Here is a 103-residue protein sequence, read N- to C-terminus: Small ribosomal subunit protein uS10 (103 aa).

The protein belongs to the universal ribosomal protein uS10 family. Part of the 30S ribosomal subunit.

Its function is as follows. Involved in the binding of tRNA to the ribosomes. The sequence is that of Small ribosomal subunit protein uS10 from Aromatoleum aromaticum (strain DSM 19018 / LMG 30748 / EbN1) (Azoarcus sp. (strain EbN1)).